Here is a 728-residue protein sequence, read N- to C-terminus: Polyribonucleotide nucleotidyltransferase (728 aa).

2 residues coordinate Mg(2+): D488 and D494. One can recognise a KH domain in the interval 555–614; it reads PRMITMKIHPDKIREVIGKGGSTIQALTKETGTTIDIQEDGTITIASTSTDGMAEAKRRI. The S1 motif domain maps to 624–692; the sequence is GKIYNGTVLK…EKGRLRLSLK (69 aa). A disordered region spans residues 702–728; sequence ISPVNAGEAAPAPAPAAAPATPSDQQQ. Low complexity predominate over residues 710–721; sequence AAPAPAPAAAPA.

Belongs to the polyribonucleotide nucleotidyltransferase family. Requires Mg(2+) as cofactor.

It is found in the cytoplasm. It catalyses the reaction RNA(n+1) + phosphate = RNA(n) + a ribonucleoside 5'-diphosphate. Its function is as follows. Involved in mRNA degradation. Catalyzes the phosphorolysis of single-stranded polyribonucleotides processively in the 3'- to 5'-direction. The chain is Polyribonucleotide nucleotidyltransferase from Cupriavidus pinatubonensis (strain JMP 134 / LMG 1197) (Cupriavidus necator (strain JMP 134)).